We begin with the raw amino-acid sequence, 107 residues long: uncharacterized protein (107 aa).

A helical transmembrane segment spans residues 37-59 (MVFSFLTVMPGDFIKCLFLRFFV).

The protein resides in the membrane. This is an uncharacterized protein from Saccharomyces cerevisiae (strain ATCC 204508 / S288c) (Baker's yeast).